A 207-amino-acid chain; its full sequence is dITP/XTP pyrophosphatase (207 aa).

Ser-16 to Lys-21 is a binding site for substrate. Residue Asp-79 is the Proton acceptor of the active site. Residue Asp-79 participates in Mg(2+) binding. Residues Ser-80, Phe-166–Asp-169, Lys-189, and His-194–Arg-195 contribute to the substrate site.

The protein belongs to the HAM1 NTPase family. In terms of assembly, homodimer. It depends on Mg(2+) as a cofactor.

It catalyses the reaction XTP + H2O = XMP + diphosphate + H(+). The enzyme catalyses dITP + H2O = dIMP + diphosphate + H(+). The catalysed reaction is ITP + H2O = IMP + diphosphate + H(+). Functionally, pyrophosphatase that catalyzes the hydrolysis of nucleoside triphosphates to their monophosphate derivatives, with a high preference for the non-canonical purine nucleotides XTP (xanthosine triphosphate), dITP (deoxyinosine triphosphate) and ITP. Seems to function as a house-cleaning enzyme that removes non-canonical purine nucleotides from the nucleotide pool, thus preventing their incorporation into DNA/RNA and avoiding chromosomal lesions. The sequence is that of dITP/XTP pyrophosphatase from Acinetobacter baumannii (strain ATCC 17978 / DSM 105126 / CIP 53.77 / LMG 1025 / NCDC KC755 / 5377).